A 249-amino-acid chain; its full sequence is Esterase YjfP (249 aa).

Its function is as follows. Displays esterase activity toward palmitoyl-CoA and pNP-butyrate. In Escherichia coli (strain K12), this protein is Esterase YjfP (yjfP).